Here is a 75-residue protein sequence, read N- to C-terminus: Small ribosomal subunit protein bS18 (75 aa).

It belongs to the bacterial ribosomal protein bS18 family. Part of the 30S ribosomal subunit. Forms a tight heterodimer with protein bS6.

Functionally, binds as a heterodimer with protein bS6 to the central domain of the 16S rRNA, where it helps stabilize the platform of the 30S subunit. This chain is Small ribosomal subunit protein bS18, found in Ruegeria sp. (strain TM1040) (Silicibacter sp.).